A 773-amino-acid polypeptide reads, in one-letter code: Photosystem I P700 chlorophyll a apoprotein A1 (773 aa).

The interval 1–27 (MTISPPERGEKAKGAAPTPYDQPVDRD) is disordered. Helical transmembrane passes span 80–103 (IFSA…FHGA), 166–189 (LMAL…YHYH), 205–229 (LQHH…HIGA), 315–333 (ISHH…GHMW), 375–398 (WHGQ…HHMY), 414–440 (LGLF…IAMI), 462–484 (AIIS…LYIH), and 564–582 (LMIH…LILL). Residues Cys-606 and Cys-615 each contribute to the [4Fe-4S] cluster site. 2 consecutive transmembrane segments (helical) span residues 622–643 (HVFL…HFSW) and 687–709 (ISMY…MFLF). A divinylchlorophyll a'-binding site is contributed by His-698. 2 residues coordinate divinyl chlorophyll a: Met-706 and Tyr-714. Trp-715 is a binding site for phylloquinone. Residues 747 to 767 (AVGVAHFLLGGIATTWAFFHA) form a helical membrane-spanning segment.

Belongs to the PsaA/PsaB family. The PsaA/B heterodimer binds the P700 divinyl chlorophyll special pair and subsequent electron acceptors. PSI consists of a core antenna complex that captures photons, and an electron transfer chain that converts photonic excitation into a charge separation. The cyanobacterial PSI reaction center is composed of one copy each of PsaA,B,C,D,E,F,I,J,K,L,M and X, and forms trimeric complexes. The cofactor is PSI electron transfer chain: 5 divinyl chlorophyll a, 1 divinyl chlorophyll a', 2 phylloquinones and 3 4Fe-4S clusters. PSI core antenna: 90 divinyl chlorophyll a, 22 carotenoids, 3 phospholipids and 1 galactolipid. P700 is a divinyl chlorophyll a/divinyl chlorophyll a' dimer, A0 is one or more divinylchlorophyll a, A1 is one or both phylloquinones and FX is a shared 4Fe-4S iron-sulfur center..

It is found in the cellular thylakoid membrane. The catalysed reaction is reduced [plastocyanin] + hnu + oxidized [2Fe-2S]-[ferredoxin] = oxidized [plastocyanin] + reduced [2Fe-2S]-[ferredoxin]. Its function is as follows. PsaA and PsaB bind P700, the primary electron donor of photosystem I (PSI), as well as the electron acceptors A0, A1 and FX. PSI is a plastocyanin/cytochrome c6-ferredoxin oxidoreductase, converting photonic excitation into a charge separation, which transfers an electron from the donor P700 chlorophyll pair to the spectroscopically characterized acceptors A0, A1, FX, FA and FB in turn. Oxidized P700 is reduced on the lumenal side of the thylakoid membrane by plastocyanin or cytochrome c6. The sequence is that of Photosystem I P700 chlorophyll a apoprotein A1 from Prochlorococcus marinus (strain SARG / CCMP1375 / SS120).